The chain runs to 950 residues: Zinc finger CCCH domain-containing protein 3 (950 aa).

4 disordered regions span residues 32–106 (GNSS…HPEP), 127–182 (IKPP…TKVG), 201–220 (VVKSVGRVSDSSPEHRRTVS), and 314–489 (SEKS…VLRK). Over residues 56–74 (RPSRRGFSSHHGPSWRKKY) the composition is skewed to basic residues. The span at 76 to 96 (LVNQPVESSDPASDPAFQTSL) shows a compositional bias: polar residues. The segment covering 327-338 (PRTTLESGNKAT) has biased composition (polar residues). Basic and acidic residues predominate over residues 344–360 (KTEKPQPKVDPEVRPEK). Residues 370-388 (SPSKYKWKASSPSASSSSS) are compositionally biased toward low complexity. Positions 402 to 412 (SQLSPVPSRPT) are enriched in polar residues. Ser-405 carries the post-translational modification Phosphoserine. The span at 438-449 (VKSRTKIIRRRG) shows a compositional bias: basic residues. Positions 460-470 (SPTTATTSKNH) are enriched in polar residues. C3H1-type zinc fingers lie at residues 662 to 690 (EKKREYCMYYNRFGRCNRGECCPYIHDPE), 694 to 717 (VCTRFVRGTCKKTDGSCPFSHHVS), 718 to 744 (KEKMPVCSYFLKGICSNSNCPYSHVYV), 745 to 772 (SRKAEVCSDFLKGYCPLGAKCKKKHTLL), and 773 to 795 (CPDFARRGICPRGSQCQLLHRNQ). A disordered region spans residues 793-950 (RNQKRHGRRT…GKPLHIKPRL (158 aa)). The span at 828–838 (PTTTQRSVRQM) shows a compositional bias: polar residues. Positions 839–849 (SSGLASGAEAP) are enriched in low complexity. A phosphoserine mark is found at Ser-851 and Ser-855. Over residues 857-888 (RVLASTSTLSSKATAASSPSPSPSTSSPAPSL) the composition is skewed to low complexity. Polar residues predominate over residues 914 to 928 (SLHSSPSPGGQTETG). Residues Ser-918, Ser-920, and Ser-934 each carry the phosphoserine modification.

In terms of assembly, interacts with SMAD1, SMAD3, SMAD4, CPSF2 and CPSF3.

It localises to the nucleus. In terms of biological role, required for the export of polyadenylated mRNAs from the nucleus. Enhances ACVR1B-induced SMAD-dependent transcription. Binds to single-stranded DNA but not to double-stranded DNA in vitro. Involved in RNA cleavage. The protein is Zinc finger CCCH domain-containing protein 3 (Zc3h3) of Mus musculus (Mouse).